The following is a 365-amino-acid chain: Medium chain reductase pydE (365 aa).

Residues 21-362 enclose the Enoyl reductase (ER) domain; sequence KLIDSLPVPP…SKRARGKVLI (342 aa). Residues 185-188, Tyr-226, 274-275, and 354-355 each bind NADP(+); these read SGSV, IG, and KR.

Belongs to the zinc-containing alcohol dehydrogenase family. As to quaternary structure, monomer.

It participates in mycotoxin biosynthesis. Medium chain reductase; part of the gene cluster that mediates the biosynthesis of pyrrocidines, fungal natural products containing a macrocyclic para-cyclophane connected to a decahydrofluorene ring system that show potent antibiotic activities toward Gram-negative bacteria. Within the pathway, pydE functions synergistically with pydB, pydX and pydZ to form the cyclophane. The pathway begins with the PKS-NRPS pydA which, with the help of the trans-enoyl reductase pydC, synthesizes the polyketide-tyrosyl acyl thioester product which can be reductively off-loaded by the terminal reductase (R) domain in pydA. The alpha/beta hydrolase pydG is then required to catalyze the subsequent Knoevenagel condensation that affords the 3-pyrrolin-2-one ring, whereas the four proteins pydB, pydE, pydX and pydZ then function synergistically to form the cyclophane. PydB and the membrane-bound pydX and pydZ are lipid-binding proteins that can sequester and mold the pdyG product into the inverse S-shape. Binding of the medium chain reductase pydE to the complex would trigger the cascade oxidative cyclization. PydY is involved in the Diels-Alder cycloaddition that forms the decahydrofluorene core. Additional non-enzymatic hydroxylation yields pyrrocidine A2 which can be further reduced into pyrrocidine B by an endogenous reductase. In Acremonium sp, this protein is Medium chain reductase pydE.